Here is a 207-residue protein sequence, read N- to C-terminus: Ribosomal RNA large subunit methyltransferase E (207 aa).

Residues 1-20 are disordered; sequence MKRDPTKGRKTPDHYARKAK. S-adenosyl-L-methionine-binding residues include Gly-56, Trp-58, Asp-76, Asp-94, and Asp-116. Lys-156 (proton acceptor) is an active-site residue.

Belongs to the class I-like SAM-binding methyltransferase superfamily. RNA methyltransferase RlmE family.

The protein localises to the cytoplasm. The catalysed reaction is uridine(2552) in 23S rRNA + S-adenosyl-L-methionine = 2'-O-methyluridine(2552) in 23S rRNA + S-adenosyl-L-homocysteine + H(+). In terms of biological role, specifically methylates the uridine in position 2552 of 23S rRNA at the 2'-O position of the ribose in the fully assembled 50S ribosomal subunit. The chain is Ribosomal RNA large subunit methyltransferase E from Desulfosudis oleivorans (strain DSM 6200 / JCM 39069 / Hxd3) (Desulfococcus oleovorans).